We begin with the raw amino-acid sequence, 223 residues long: Cutinase (223 aa).

Positions M1–A19 are cleaved as a signal peptide. C46 and C124 form a disulfide bridge. S135 serves as the catalytic Nucleophile. C185 and C192 form a disulfide bridge. D189 is a catalytic residue. H202 serves as the catalytic Proton donor/acceptor.

It belongs to the cutinase family. Post-translationally, the 2 disulfide bonds play a critical role in holding the catalytic residues in juxta-position; reduction of the disulfide bridges results in the complete inactivation of the enzyme.

The protein resides in the secreted. The catalysed reaction is cutin + H2O = cutin monomers.. Its function is as follows. Catalyzes the hydrolysis of complex carboxylic polyesters found in the cell wall of plants. Degrades cutin, a macromolecule that forms the structure of the plant cuticle. Allows pathogenic fungi to penetrate through the cuticular barrier into the host plant during the initial stage of fungal infection. The chain is Cutinase (CUT) from Didymella rabiei (Chickpea ascochyta blight fungus).